The chain runs to 266 residues: MSFSKESSRLFGFVAGIKFPKMIQKVINENYVKYFNINMSEFKAPCEYESLNALFTRTLQIPRKFEEGFISPSDGKILECGSTFLANEEHFAFSIKGHAYSVEELLKDSFEKDELKNGLDYVNIYLSPKDYHRYHSPCDMQILSATYTSGVLYSVNEKHLERISNLYVKNERVSLKCQNEKGIFWLVFVGAQNVGKMRFNFDASIQTNAKISHNFTRKYENLNFKKGEELGNFELGSTIVLISQKGLLTFNLKVGQGIKFGEKIAD.

Active-site charge relay system; for autoendoproteolytic cleavage activity residues include Asp-74, His-135, and Ser-237. The Schiff-base intermediate with substrate; via pyruvic acid; for decarboxylase activity role is filled by Ser-237. Ser-237 carries the pyruvic acid (Ser); by autocatalysis modification.

This sequence belongs to the phosphatidylserine decarboxylase family. PSD-B subfamily. Prokaryotic type I sub-subfamily. As to quaternary structure, heterodimer of a large membrane-associated beta subunit and a small pyruvoyl-containing alpha subunit. Pyruvate is required as a cofactor. Is synthesized initially as an inactive proenzyme. Formation of the active enzyme involves a self-maturation process in which the active site pyruvoyl group is generated from an internal serine residue via an autocatalytic post-translational modification. Two non-identical subunits are generated from the proenzyme in this reaction, and the pyruvate is formed at the N-terminus of the alpha chain, which is derived from the carboxyl end of the proenzyme. The autoendoproteolytic cleavage occurs by a canonical serine protease mechanism, in which the side chain hydroxyl group of the serine supplies its oxygen atom to form the C-terminus of the beta chain, while the remainder of the serine residue undergoes an oxidative deamination to produce ammonia and the pyruvoyl prosthetic group on the alpha chain. During this reaction, the Ser that is part of the protease active site of the proenzyme becomes the pyruvoyl prosthetic group, which constitutes an essential element of the active site of the mature decarboxylase.

The protein localises to the cell membrane. The enzyme catalyses a 1,2-diacyl-sn-glycero-3-phospho-L-serine + H(+) = a 1,2-diacyl-sn-glycero-3-phosphoethanolamine + CO2. Its pathway is phospholipid metabolism; phosphatidylethanolamine biosynthesis; phosphatidylethanolamine from CDP-diacylglycerol: step 2/2. In terms of biological role, catalyzes the formation of phosphatidylethanolamine (PtdEtn) from phosphatidylserine (PtdSer). This chain is Phosphatidylserine decarboxylase proenzyme, found in Campylobacter jejuni subsp. jejuni serotype O:2 (strain ATCC 700819 / NCTC 11168).